A 544-amino-acid polypeptide reads, in one-letter code: Chaperonin GroEL 2 (544 aa).

Residues 30–33 (TLGP), 87–91 (DGTTT), G415, 480–482 (NAA), and D496 contribute to the ATP site.

The protein belongs to the chaperonin (HSP60) family. As to quaternary structure, forms a cylinder of 14 subunits composed of two heptameric rings stacked back-to-back. Interacts with the co-chaperonin GroES.

It localises to the cytoplasm. The catalysed reaction is ATP + H2O + a folded polypeptide = ADP + phosphate + an unfolded polypeptide.. Together with its co-chaperonin GroES, plays an essential role in assisting protein folding. The GroEL-GroES system forms a nano-cage that allows encapsulation of the non-native substrate proteins and provides a physical environment optimized to promote and accelerate protein folding. The sequence is that of Chaperonin GroEL 2 from Albidiferax ferrireducens (strain ATCC BAA-621 / DSM 15236 / T118) (Rhodoferax ferrireducens).